A 703-amino-acid polypeptide reads, in one-letter code: Glycine--tRNA ligase beta subunit (703 aa).

Belongs to the class-II aminoacyl-tRNA synthetase family. Tetramer of two alpha and two beta subunits.

The protein localises to the cytoplasm. The catalysed reaction is tRNA(Gly) + glycine + ATP = glycyl-tRNA(Gly) + AMP + diphosphate. In Myxococcus xanthus (strain DK1622), this protein is Glycine--tRNA ligase beta subunit.